Reading from the N-terminus, the 496-residue chain is Pup--protein ligase (496 aa).

Position 30 (Glu30) interacts with Mg(2+). Residue Arg73 coordinates ATP. Residue Tyr75 participates in Mg(2+) binding. Catalysis depends on Asp77, which acts as the Proton acceptor. Glu83 is a Mg(2+) binding site. Thr86 and Trp450 together coordinate ATP.

It belongs to the Pup ligase/Pup deamidase family. Pup-conjugating enzyme subfamily.

It carries out the reaction ATP + [prokaryotic ubiquitin-like protein]-L-glutamate + [protein]-L-lysine = ADP + phosphate + N(6)-([prokaryotic ubiquitin-like protein]-gamma-L-glutamyl)-[protein]-L-lysine.. Its pathway is protein degradation; proteasomal Pup-dependent pathway. It functions in the pathway protein modification; protein pupylation. Catalyzes the covalent attachment of the prokaryotic ubiquitin-like protein modifier Pup to the proteasomal substrate proteins, thereby targeting them for proteasomal degradation. This tagging system is termed pupylation. The ligation reaction involves the side-chain carboxylate of the C-terminal glutamate of Pup and the side-chain amino group of a substrate lysine. The sequence is that of Pup--protein ligase from Bifidobacterium animalis subsp. lactis (strain AD011).